The primary structure comprises 546 residues: FAD-dependent monooxygenase (546 aa).

A signal peptide spans 1–17; sequence MYDVIVVGAGWCGLAAA. I106 contacts FAD. N-linked (GlcNAc...) asparagine glycans are attached at residues N239 and N343.

The protein belongs to the FAD-binding monooxygenase family. FAD serves as cofactor.

Its pathway is antifungal biosynthesis. Functionally, FAD-dependent monooxygenase; part of the gene cluster that mediates the biosynthesis of the tetrahydropyranyl antifungal agent lanomycin that acts as an inhibitor of CYP51 and blocks the ergosterol biosynthesis. The biosynthesis probably begins with the formation of an hexaketide, followed by methionine mediated alkylation of C-2 and C-6, and methylation of the reduced C-3 oxygen, pyran forming reductive ring closure, oxygenation of C-4, beta-keto reduction, enoyl reduction and dehydration of the remaining oxygens, and finally, acylation with glycine to complete the biosynthesis. The chain is FAD-dependent monooxygenase from Pyrenophora dematioidea (Helminthosporium dematioideum).